The following is a 260-amino-acid chain: MAKDDSTVRCFQGLLIFGHVIVGMCGIALTAECIFFVSDQHSLYPLLEATNNDDIFGAAWIGMFVGICLFCLSVLAIVGIMKSNRKILLAYFIMMFIVYGFEVASCITAATQRDFFTTNLFLKQMLMRYQNNSPPTNDDKWKNSYVTKTWDRLMLQDHCCGVNGPSDWQKYTSAFRVENSDADYPWPRQCCVMDKLQEPLNLDACKLGVPGYYHSQGCYELISGPMDRHAWGVAWFGFAILCWTFWVLLGTMFYWSRIEY.

Residues 1–15 (MAKDDSTVRCFQGLL) lie on the Cytoplasmic side of the membrane. Residues 16–36 (IFGHVIVGMCGIALTAECIFF) form a helical membrane-spanning segment. Topologically, residues 37-59 (VSDQHSLYPLLEATNNDDIFGAA) are extracellular. Residues 60–80 (WIGMFVGICLFCLSVLAIVGI) form a helical membrane-spanning segment. Residues 81-86 (MKSNRK) are Cytoplasmic-facing. The helical transmembrane segment at 87–107 (ILLAYFIMMFIVYGFEVASCI) threads the bilayer. Residues 108–229 (TAATQRDFFT…ELISGPMDRH (122 aa)) are Extracellular-facing. Residues 230 to 250 (AWGVAWFGFAILCWTFWVLLG) form a helical membrane-spanning segment. At 251–260 (TMFYWSRIEY) the chain is on the cytoplasmic side.

The protein belongs to the tetraspanin (TM4SF) family. In terms of assembly, heterodimer with uroplakin-3A (UPK3A) or uroplakin-3B (UPK3B). N-glycosylated with high-mannose oligosaccharides.

The protein resides in the membrane. Component of the asymmetric unit membrane (AUM); a highly specialized biomembrane elaborated by terminally differentiated urothelial cells. May play an important role in normal bladder epithelial physiology, possibly in regulating membrane permeability of superficial umbrella cells or in stabilizing the apical membrane through AUM/cytoskeletal interactions. This chain is Uroplakin-1b (Upk1b), found in Rattus norvegicus (Rat).